Reading from the N-terminus, the 180-residue chain is CASP-like protein XL3 (180 aa).

The Cytoplasmic portion of the chain corresponds to Met1–Lys7. The chain crosses the membrane as a helical span at residues Ile8 to Gly28. The Extracellular portion of the chain corresponds to Leu29–Arg49. A helical membrane pass occupies residues Ala50–Cys70. Residues Cys71–Gln98 are Cytoplasmic-facing. A helical transmembrane segment spans residues Ala99 to Leu119. The Extracellular portion of the chain corresponds to Thr120 to Gln140. The chain crosses the membrane as a helical span at residues Ile141–Ile161. The Cytoplasmic portion of the chain corresponds to Ser162–Leu180.

The protein belongs to the Casparian strip membrane proteins (CASP) family. Homodimer and heterodimers.

It localises to the cell membrane. In Gossypium hirsutum (Upland cotton), this protein is CASP-like protein XL3 (XL3).